We begin with the raw amino-acid sequence, 196 residues long: GTP cyclohydrolase 1 (196 aa).

Positions 86, 89, and 158 each coordinate Zn(2+).

This sequence belongs to the GTP cyclohydrolase I family. Homomer.

It carries out the reaction GTP + H2O = 7,8-dihydroneopterin 3'-triphosphate + formate + H(+). It functions in the pathway cofactor biosynthesis; 7,8-dihydroneopterin triphosphate biosynthesis; 7,8-dihydroneopterin triphosphate from GTP: step 1/1. This Clostridium botulinum (strain Kyoto / Type A2) protein is GTP cyclohydrolase 1.